A 348-amino-acid chain; its full sequence is Protein-glutamate methylesterase/protein-glutamine glutaminase 2 (348 aa).

In terms of domain architecture, Response regulatory spans 5-122 (KVLIIDDSAL…DLGLSQYRDE (118 aa)). Asp-56 is subject to 4-aspartylphosphate. One can recognise a CheB-type methylesterase domain in the interval 157–348 (SLKTGFLCAI…AANIIKHALK (192 aa)). Catalysis depends on residues Ser-169, His-195, and Asp-291.

This sequence belongs to the CheB family. Post-translationally, phosphorylated by CheA. Phosphorylation of the N-terminal regulatory domain activates the methylesterase activity.

Its subcellular location is the cytoplasm. It carries out the reaction [protein]-L-glutamate 5-O-methyl ester + H2O = L-glutamyl-[protein] + methanol + H(+). The catalysed reaction is L-glutaminyl-[protein] + H2O = L-glutamyl-[protein] + NH4(+). Functionally, involved in chemotaxis. Part of a chemotaxis signal transduction system that modulates chemotaxis in response to various stimuli. Catalyzes the demethylation of specific methylglutamate residues introduced into the chemoreceptors (methyl-accepting chemotaxis proteins or MCP) by CheR. Also mediates the irreversible deamidation of specific glutamine residues to glutamic acid. The chain is Protein-glutamate methylesterase/protein-glutamine glutaminase 2 from Saccharophagus degradans (strain 2-40 / ATCC 43961 / DSM 17024).